The chain runs to 177 residues: MSRIGKKPVPVPAGVTASVEGQTVKAKGAKGELSFVVHDEVLVKMEDGAVRVDPRDQSREARSKWGMSRTMISNIFVGVKDGFEKKLEISGVGYRAAMQGKNLQLSLGFSHEVVYDVPAGITVAVPKPTEIVVTGIDKQQVGQVAAEIREYRGPEPYKGKGVKYAGEKIVRKEGKKK.

Belongs to the universal ribosomal protein uL6 family. In terms of assembly, part of the 50S ribosomal subunit.

Its function is as follows. This protein binds to the 23S rRNA, and is important in its secondary structure. It is located near the subunit interface in the base of the L7/L12 stalk, and near the tRNA binding site of the peptidyltransferase center. This chain is Large ribosomal subunit protein uL6, found in Brucella melitensis biotype 1 (strain ATCC 23456 / CCUG 17765 / NCTC 10094 / 16M).